The primary structure comprises 203 residues: Large ribosomal subunit protein bL25 (203 aa).

This sequence belongs to the bacterial ribosomal protein bL25 family. CTC subfamily. As to quaternary structure, part of the 50S ribosomal subunit; part of the 5S rRNA/L5/L18/L25 subcomplex. Contacts the 5S rRNA. Binds to the 5S rRNA independently of L5 and L18.

Its function is as follows. This is one of the proteins that binds to the 5S RNA in the ribosome where it forms part of the central protuberance. The protein is Large ribosomal subunit protein bL25 of Wolbachia pipientis subsp. Culex pipiens (strain wPip).